Reading from the N-terminus, the 341-residue chain is tRNA N6-adenosine threonylcarbamoyltransferase (341 aa).

Fe cation contacts are provided by histidine 111 and histidine 115. Substrate is bound by residues 134–138 (LVSGG), aspartate 167, glycine 180, and asparagine 276. Aspartate 304 lines the Fe cation pocket.

This sequence belongs to the KAE1 / TsaD family. The cofactor is Fe(2+).

Its subcellular location is the cytoplasm. The enzyme catalyses L-threonylcarbamoyladenylate + adenosine(37) in tRNA = N(6)-L-threonylcarbamoyladenosine(37) in tRNA + AMP + H(+). Its function is as follows. Required for the formation of a threonylcarbamoyl group on adenosine at position 37 (t(6)A37) in tRNAs that read codons beginning with adenine. Is involved in the transfer of the threonylcarbamoyl moiety of threonylcarbamoyl-AMP (TC-AMP) to the N6 group of A37, together with TsaE and TsaB. TsaD likely plays a direct catalytic role in this reaction. This Pseudomonas syringae pv. syringae (strain B728a) protein is tRNA N6-adenosine threonylcarbamoyltransferase.